The primary structure comprises 112 residues: Protein Churchill (112 aa).

Residues Cys-2, Cys-5, Cys-30, Cys-33, His-59, Cys-61, Cys-64, His-66, His-71, Cys-88, and Cys-91 each coordinate Zn(2+).

It belongs to the Churchill family.

Transcriptional activator that mediates FGF signaling during neural development. Plays a role in the regulation of cell movement. Does not bind DNA by itself. The sequence is that of Protein Churchill (churc1) from Xenopus laevis (African clawed frog).